The chain runs to 272 residues: L-aminoadipate-semialdehyde dehydrogenase-phosphopantetheinyl transferase (272 aa).

It belongs to the P-Pant transferase superfamily. AcpS family.

It carries out the reaction apo-[ACP] + CoA = holo-[ACP] + adenosine 3',5'-bisphosphate + H(+). Its function is as follows. Catalyzes the transfer of a 4'-phosphopantetheine moiety from coenzyme A to a serine residue of acceptor proteins, such as alpha-aminoadipate reductase. Necessary for alpha-aminoadipate reductase activity. The chain is L-aminoadipate-semialdehyde dehydrogenase-phosphopantetheinyl transferase from Saccharomyces cerevisiae (strain ATCC 204508 / S288c) (Baker's yeast).